The sequence spans 179 residues: Large ribosomal subunit protein uL5 (179 aa).

Belongs to the universal ribosomal protein uL5 family. Part of the 50S ribosomal subunit; part of the 5S rRNA/L5/L18/L25 subcomplex. Contacts the 5S rRNA and the P site tRNA. Forms a bridge to the 30S subunit in the 70S ribosome.

Its function is as follows. This is one of the proteins that bind and probably mediate the attachment of the 5S RNA into the large ribosomal subunit, where it forms part of the central protuberance. In the 70S ribosome it contacts protein S13 of the 30S subunit (bridge B1b), connecting the 2 subunits; this bridge is implicated in subunit movement. Contacts the P site tRNA; the 5S rRNA and some of its associated proteins might help stabilize positioning of ribosome-bound tRNAs. This chain is Large ribosomal subunit protein uL5, found in Xylella fastidiosa (strain M12).